The following is a 192-amino-acid chain: Probable nicotinate-nucleotide adenylyltransferase (192 aa).

It belongs to the NadD family.

The enzyme catalyses nicotinate beta-D-ribonucleotide + ATP + H(+) = deamido-NAD(+) + diphosphate. It participates in cofactor biosynthesis; NAD(+) biosynthesis; deamido-NAD(+) from nicotinate D-ribonucleotide: step 1/1. In terms of biological role, catalyzes the reversible adenylation of nicotinate mononucleotide (NaMN) to nicotinic acid adenine dinucleotide (NaAD). This is Probable nicotinate-nucleotide adenylyltransferase from Staphylococcus haemolyticus (strain JCSC1435).